Reading from the N-terminus, the 117-residue chain is Large ribosomal subunit protein uL18 (117 aa).

This sequence belongs to the universal ribosomal protein uL18 family. Part of the 50S ribosomal subunit; part of the 5S rRNA/L5/L18/L25 subcomplex. Contacts the 5S and 23S rRNAs.

This is one of the proteins that bind and probably mediate the attachment of the 5S RNA into the large ribosomal subunit, where it forms part of the central protuberance. The polypeptide is Large ribosomal subunit protein uL18 (Aster yellows witches'-broom phytoplasma (strain AYWB)).